The following is a 302-amino-acid chain: Citrate lyase subunit beta (302 aa).

Substrate is bound by residues R69 and E132. The Mg(2+) site is built by E132 and D159.

Belongs to the HpcH/HpaI aldolase family. Citrate lyase beta subunit subfamily. In terms of assembly, oligomer with a subunit composition of (alpha,beta,gamma)6. It depends on Mg(2+) as a cofactor.

It localises to the cytoplasm. It catalyses the reaction citrate = oxaloacetate + acetate. The catalysed reaction is (3S)-citryl-CoA = oxaloacetate + acetyl-CoA. In terms of biological role, represents a citryl-ACP lyase. The polypeptide is Citrate lyase subunit beta (citE) (Leuconostoc mesenteroides subsp. cremoris).